The following is a 62-amino-acid chain: Synergistic-type venom protein C8S2, chain 1 (62 aa).

Cystine bridges form between Cys3–Cys24, Cys17–Cys42, and Cys46–Cys57.

It belongs to the three-finger toxin family. Short-chain subfamily. Aminergic toxin sub-subfamily. In terms of assembly, heterodimer of C8S2 chain 1 and chain 2 (AC P01411); disulfide-linked. As to expression, expressed by the venom gland.

It localises to the secreted. In terms of biological role, this protein shows a synergetic toxic effect in that it enhances the toxicity of other toxins. The polypeptide is Synergistic-type venom protein C8S2, chain 1 (Dendroaspis angusticeps (Eastern green mamba)).